Consider the following 64-residue polypeptide: Large ribosomal subunit protein bL35 (64 aa).

The interval 1-56 is disordered; that stretch reads MPKMKSNKSVAARFKLTGSGQLKRTRPGKRHKLSKKSSQEKRNLSKQPLVDKGQVG. Basic residues predominate over residues 23-35; sequence KRTRPGKRHKLSK.

Belongs to the bacterial ribosomal protein bL35 family.

The chain is Large ribosomal subunit protein bL35 from Chlamydia abortus (strain DSM 27085 / S26/3) (Chlamydophila abortus).